The sequence spans 181 residues: Minor capsid protein P4 (181 aa).

Interacts with the major capsid protein.

The protein resides in the virion. Functionally, one of the minor capsid proteins that constitute a network internal to the major capsid proteins and outside the lipid membrane. The minor capsid proteins glue and stabilize the capsomers. The sequence is that of Minor capsid protein P4 from Chlorella (PBCV-1).